Reading from the N-terminus, the 347-residue chain is Protein phosphatase 2C homolog 1 (347 aa).

Residues 1–41 (MKGSHPNAGSLLEPLHKLNPFSENSTSGHRKNASDHSADGE) are disordered. Residues 32-41 (NASDHSADGE) are compositionally biased toward basic and acidic residues. The PPM-type phosphatase domain maps to 71–323 (LAGLMEDKNQ…DNITCIVVNL (253 aa)). The Mn(2+) site is built by Asp-109, Gly-110, Asp-275, and Asp-314.

This sequence belongs to the PP2C family. Monomer. Requires Mg(2+) as cofactor. The cofactor is Mn(2+).

The enzyme catalyses O-phospho-L-seryl-[protein] + H2O = L-seryl-[protein] + phosphate. It carries out the reaction O-phospho-L-threonyl-[protein] + H2O = L-threonyl-[protein] + phosphate. Functionally, serine and threonine phosphatase. Has a specialized role in the heat shock response. May be responsible for the dephosphorylation of hsp90. The chain is Protein phosphatase 2C homolog 1 (ptc1) from Schizosaccharomyces pombe (strain 972 / ATCC 24843) (Fission yeast).